The primary structure comprises 401 residues: Acetate kinase (401 aa).

Asparagine 9 provides a ligand contact to Mg(2+). Lysine 16 contacts ATP. Arginine 88 provides a ligand contact to substrate. Catalysis depends on aspartate 147, which acts as the Proton donor/acceptor. Residues 207-211 (HLGNG), 282-284 (DCR), and 333-337 (GIGEN) each bind ATP. Residue glutamate 388 coordinates Mg(2+).

The protein belongs to the acetokinase family. As to quaternary structure, homodimer. Mg(2+) is required as a cofactor. Requires Mn(2+) as cofactor.

Its subcellular location is the cytoplasm. It catalyses the reaction acetate + ATP = acetyl phosphate + ADP. It participates in metabolic intermediate biosynthesis; acetyl-CoA biosynthesis; acetyl-CoA from acetate: step 1/2. In terms of biological role, catalyzes the formation of acetyl phosphate from acetate and ATP. Can also catalyze the reverse reaction. This is Acetate kinase from Haemophilus influenzae (strain 86-028NP).